Reading from the N-terminus, the 261-residue chain is Indole-3-glycerol phosphate synthase (261 aa).

The protein belongs to the TrpC family.

It catalyses the reaction 1-(2-carboxyphenylamino)-1-deoxy-D-ribulose 5-phosphate + H(+) = (1S,2R)-1-C-(indol-3-yl)glycerol 3-phosphate + CO2 + H2O. It functions in the pathway amino-acid biosynthesis; L-tryptophan biosynthesis; L-tryptophan from chorismate: step 4/5. The sequence is that of Indole-3-glycerol phosphate synthase from Campylobacter curvus (strain 525.92).